The primary structure comprises 225 residues: MKERKFVNEAVKRLLVYEYLVKETENAGFGKMSMKRTPFGTNITLYVNRPGLVIGRRGSKVQQMTETLEKKYAIETPQIEVKDVKDPDLNPSVIAKKIALSLEKGWSYRKAGNTSLKRTIDAGARGVLIKISGKISGERARYQKFIYGNVKYSGEPGSKGMLVGFSTAKLKVGILGVTVKILNPEYKLPDVFSISNLAGGENVGTESETDKADEQGREAANTEES.

One can recognise a KH type-2 domain in the interval 16 to 85; sequence VYEYLVKETE…TPQIEVKDVK (70 aa). The disordered stretch occupies residues 200 to 225; sequence GENVGTESETDKADEQGREAANTEES. The span at 208–217 shows a compositional bias: basic and acidic residues; sequence ETDKADEQGR.

It belongs to the universal ribosomal protein uS3 family. Part of the 30S ribosomal subunit.

In terms of biological role, binds the lower part of the 30S subunit head. In Thermoplasma volcanium (strain ATCC 51530 / DSM 4299 / JCM 9571 / NBRC 15438 / GSS1), this protein is Small ribosomal subunit protein uS3.